Here is a 662-residue protein sequence, read N- to C-terminus: Probable quinol oxidase subunit 1 (662 aa).

The next 2 membrane-spanning stretches (helical) occupy residues 14-34 (WMIT…IAVI) and 58-78 (IMYL…ALLI). His102 provides a ligand contact to Fe(II)-heme a. Transmembrane regions (helical) follow at residues 103–123 (GVIM…NIVV), 140–160 (VSFW…IIGG), 187–207 (IAIQ…FVTI), 228–248 (FITT…LALM), 273–293 (FFWV…FGIY), 311–331 (MVWA…HHFF), 336–356 (GALI…PTGV), and 376–396 (MLFS…GVML). Residues His279, Tyr283, His328, and His329 each contribute to the Cu cation site. Residues 279–283 (HPEVY) constitute a cross-link (1'-histidyl-3'-tyrosine (His-Tyr)). His414 contacts heme a3. Helical transmembrane passes span 415-435 (FHYT…IFWY), 451-471 (CFWF…ILGL), 493-513 (ISTI…VSIV), 587-604 (PVGF…FFLI), and 608-627 (VIPA…YRSF). His416 lines the Fe(II)-heme a pocket.

It belongs to the heme-copper respiratory oxidase family. Cu cation serves as cofactor. The cofactor is ferriheme a. Requires Heme A3. as cofactor.

It localises to the cell membrane. It catalyses the reaction 2 a quinol + O2 = 2 a quinone + 2 H2O. It participates in energy metabolism; oxidative phosphorylation. Functionally, catalyzes quinol oxidation with the concomitant reduction of oxygen to water. In Staphylococcus aureus (strain USA300), this protein is Probable quinol oxidase subunit 1 (qoxB).